The following is an 845-amino-acid chain: Leucine--tRNA ligase (845 aa).

The 'HIGH' region signature appears at 40–51 (PYPSGAGLHVGH). A 'KMSKS' region motif is present at residues 623–627 (KMSKS). Residue Lys-626 coordinates ATP.

The protein belongs to the class-I aminoacyl-tRNA synthetase family.

Its subcellular location is the cytoplasm. The enzyme catalyses tRNA(Leu) + L-leucine + ATP = L-leucyl-tRNA(Leu) + AMP + diphosphate. This is Leucine--tRNA ligase from Protochlamydia amoebophila (strain UWE25).